We begin with the raw amino-acid sequence, 465 residues long: Argininosuccinate lyase (465 aa).

This sequence belongs to the lyase 1 family. Argininosuccinate lyase subfamily.

It localises to the cytoplasm. It catalyses the reaction 2-(N(omega)-L-arginino)succinate = fumarate + L-arginine. It functions in the pathway amino-acid biosynthesis; L-arginine biosynthesis; L-arginine from L-ornithine and carbamoyl phosphate: step 3/3. This is Argininosuccinate lyase from Bradyrhizobium diazoefficiens (strain JCM 10833 / BCRC 13528 / IAM 13628 / NBRC 14792 / USDA 110).